A 141-amino-acid chain; its full sequence is Transcription antitermination protein NusB (141 aa).

This sequence belongs to the NusB family.

Functionally, involved in transcription antitermination. Required for transcription of ribosomal RNA (rRNA) genes. Binds specifically to the boxA antiterminator sequence of the ribosomal RNA (rrn) operons. This Neisseria meningitidis serogroup A / serotype 4A (strain DSM 15465 / Z2491) protein is Transcription antitermination protein NusB.